We begin with the raw amino-acid sequence, 111 residues long: Cytochrome c-550 (111 aa).

Heme c-binding residues include Cys-13, Cys-16, His-17, and Met-90.

In terms of processing, binds 1 heme c group covalently per subunit.

In Novispirillum itersonii (Aquaspirillum itersonii), this protein is Cytochrome c-550.